We begin with the raw amino-acid sequence, 752 residues long: Palmitoyltransferase AKR1 (752 aa).

Disordered regions lie at residues 1-21 (MTAE…KSDY) and 49-68 (ASSE…LGSV). The Cytoplasmic portion of the chain corresponds to 1-318 (MTAEEVDKES…FPLPQYFSAS (318 aa)). Composition is skewed to basic and acidic residues over residues 9–21 (ESDP…KSDY) and 51–68 (SELK…LGSV). ANK repeat units follow at residues 72–102 (PILE…DLSN), 108–137 (ERVS…EVNF), 142–171 (LDAT…DPNI), 175–208 (QGYN…DVDQ), 212–241 (HQRT…DVKN), and 245–274 (AGFT…DFFQ). The helical transmembrane segment at 319–339 (TGKMLTFFLPWVLIPLVFYIF) threads the bilayer. Residues 340–341 (SK) are Lumenal-facing. A helical membrane pass occupies residues 342 to 362 (ITFFIALLINTIVLVISGLVL). The Cytoplasmic segment spans residues 363–380 (SRLVVPSYLLSKRHPILN). The helical transmembrane segment at 381 to 401 (SPLLAGILSGTIAIAFFIWFT) threads the bilayer. The Lumenal portion of the chain corresponds to 402–412 (KISILTFTEKP). The helical transmembrane segment at 413 to 433 (VGNIIMLGFFIGLITLFIGLM) threads the bilayer. The Cytoplasmic portion of the chain corresponds to 434 to 509 (KSDPGYIPGT…YNQIGLLNHK (76 aa)). Residues 466–516 (HFCVHTWIRIPLRSKYDRDSACLISAFDHFCPWVYNQIGLLNHKLFYMFVV) enclose the DHHC domain. The active-site S-palmitoyl cysteine intermediate is the cysteine 496. A helical membrane pass occupies residues 510–530 (LFYMFVVLLEISVWWFLPLMM). Residues 531–567 (EYFDELEDYLENRKGKHFGDCHFLGDEDLCFGLHHDT) are Lumenal-facing. A helical membrane pass occupies residues 568–588 (FNFLLLCWVIFQAFWVLCLIA). Over 589 to 752 (VQTVQMLKGV…TLPNATEELV (164 aa)) the chain is Cytoplasmic.

This sequence belongs to the DHHC palmitoyltransferase family. AKR/ZDHHC17 subfamily.

It localises to the early endosome membrane. The protein resides in the golgi apparatus membrane. It carries out the reaction L-cysteinyl-[protein] + hexadecanoyl-CoA = S-hexadecanoyl-L-cysteinyl-[protein] + CoA. Palmitoyltransferase specific for casein kinase 1. The polypeptide is Palmitoyltransferase AKR1 (AKR1) (Kluyveromyces lactis (strain ATCC 8585 / CBS 2359 / DSM 70799 / NBRC 1267 / NRRL Y-1140 / WM37) (Yeast)).